Here is a 502-residue protein sequence, read N- to C-terminus: Glycerol kinase (502 aa).

Residue Thr14 coordinates ADP. ATP-binding residues include Thr14, Thr15, and Ser16. A sn-glycerol 3-phosphate-binding site is contributed by Thr14. Arg18 contacts ADP. Residues Arg84, Glu85, Tyr136, and Asp246 each coordinate sn-glycerol 3-phosphate. Arg84, Glu85, Tyr136, Asp246, and Gln247 together coordinate glycerol. Positions 268 and 311 each coordinate ADP. Thr268, Gly311, Gln315, and Gly412 together coordinate ATP. Positions 412 and 416 each coordinate ADP.

It belongs to the FGGY kinase family. As to quaternary structure, homotetramer and homodimer (in equilibrium). Heterodimer with EIIA-Glc. Binds 1 zinc ion per glycerol kinase EIIA-Glc dimer. The zinc ion is important for dimerization.

It carries out the reaction glycerol + ATP = sn-glycerol 3-phosphate + ADP + H(+). It participates in polyol metabolism; glycerol degradation via glycerol kinase pathway; sn-glycerol 3-phosphate from glycerol: step 1/1. Its activity is regulated as follows. Activity of this regulatory enzyme is affected by several metabolites. Allosterically and non-competitively inhibited by fructose 1,6-bisphosphate (FBP) and unphosphorylated phosphocarrier protein EIIA-Glc (III-Glc), an integral component of the bacterial phosphotransferase (PTS) system. Functionally, key enzyme in the regulation of glycerol uptake and metabolism. Catalyzes the phosphorylation of glycerol to yield sn-glycerol 3-phosphate. This is Glycerol kinase from Shigella dysenteriae serotype 1 (strain Sd197).